Reading from the N-terminus, the 141-residue chain is Hemoglobin subunit alpha (141 aa).

One can recognise a Globin domain in the interval 1-141 (VLSPADKTNV…VSTVLTSKYR (141 aa)). Residue Ser-3 is modified to Phosphoserine. At Lys-7 the chain carries N6-succinyllysine. Thr-8 carries the phosphothreonine modification. Lys-11 is subject to N6-succinyllysine. An N6-acetyllysine; alternate modification is found at Lys-16. N6-succinyllysine; alternate is present on Lys-16. Tyr-24 bears the Phosphotyrosine mark. At Lys-40 the chain carries N6-succinyllysine. His-58 contacts O2. His-87 contributes to the heme b binding site. Position 102 is a phosphoserine (Ser-102). Position 108 is a phosphothreonine (Thr-108). 2 positions are modified to phosphoserine: Ser-124 and Ser-131. 2 positions are modified to phosphothreonine: Thr-134 and Thr-137. Ser-138 is subject to Phosphoserine.

The protein belongs to the globin family. As to quaternary structure, heterotetramer of two alpha chains and two beta chains. In terms of tissue distribution, red blood cells.

Its function is as follows. Involved in oxygen transport from the lung to the various peripheral tissues. Hemopressin acts as an antagonist peptide of the cannabinoid receptor CNR1. Hemopressin-binding efficiently blocks cannabinoid receptor CNR1 and subsequent signaling. The sequence is that of Hemoglobin subunit alpha (HBA) from Tursiops truncatus (Atlantic bottle-nosed dolphin).